The sequence spans 910 residues: Importin subunit beta-2 (910 aa).

HEAT repeat units follow at residues 12–39 (VLVELSEVIKNSLSENSQTRNAALNLLE), 44–82 (IPDLNNYLTCILINATELSVSIRSAAGLLLKNNVRVSSL), 93–126 (YTKSTVIRGLCDPEQLIRGISGNVITTIISRWGI), 132–169 (VLPQLMEMLSSPASTTQEGAFSALTKICEDSAQELDRD), 177–207 (DFMIPRFIELARHENPKIRTDALFCLNQFVL), 220–247 (FLETCYALATDVSPNVRKNVCQALVYLL), 259–286 (GSIVEYMLYSTQDSDQNVALEACEFWLA), 302–406 (DKIV…LSSF), 414–442 (IILPHLKQSLTSEDWKVQEAGVLAVGAIA), 454–481 (PELYPYFLSLLDSKKPLVRTITCWTLGR), 499–532 (FVPLLQGLLRMVVDNNKKVQEAGCSAFAILEEQA), 540–573 (LEPILTNLAFAFQKYQRKNVLILYDAVQTLADYV), 581–619 (RYIELLITPLLQKWSMIPDDDPNLFPLFECLSSVAVALR), 627–677 (AETY…ALGS), 690–721 (LGQIIGICAKDEVPEVRQSAYALLGDMCMYCF), 729–764 (DALLVDMLPQMQLPLLHVSASNNAIWSAGEMALQLG), 772–807 (KPLLERLICILKSKKSNTTVLENVAITIGRLGVYNP), 815–848 (ELFYQPWFEIIKTVGENEEKDSAFRGFCNILACN), and 857–888 (PMFVLCVAEYENPSAELRDMFQKILQGSVELF). The Importin N-terminal domain maps to 34–122 (ALNLLEKAKD…SGNVITTIIS (89 aa)). Residues 333 to 381 (DREEDIRPQHAKGKSRITLNTQGPITQQGSSNADADELEDEDEDDDEFD) form a disordered region. Residues 349 to 364 (ITLNTQGPITQQGSSN) are compositionally biased toward polar residues. A compositionally biased stretch (acidic residues) spans 366–381 (DADELEDEDEDDDEFD).

This sequence belongs to the importin beta family. Importin beta-2 subfamily. As to quaternary structure, interacts with Ran; interacts specifically with the GTP-bound form of Ran (GTP-Ran), protecting it from GTP hydrolysis and nucleotide exchange. Interacts with nucleoporins.

It is found in the cytoplasm. The protein localises to the nucleus envelope. Its function is as follows. Functions in nuclear protein import as nuclear transport receptor. Serves as receptor for arginine/glycine-rich nuclear localization signals (rg-NLS) and PY-NLS in cargo substrates. Its predominant cargo substrate seems to be mRNA-binding proteins. Mediates docking of the importin/substrate complex to the nuclear pore complex (NPC) through binding to repeat-containing nucleoporins. The complex is subsequently translocated through the pore by an energy requiring, Ran-dependent mechanism. At the nucleoplasmic side of the NPC, GTP-Ran binding leads to release of the cargo. The importin is re-exported from the nucleus to the cytoplasm where GTP hydrolysis releases Ran from importin. The directionality of nuclear import is thought to be conferred by an asymmetric distribution of the GTP- and GDP-bound forms of Ran between the cytoplasm and nucleus. The protein is Importin subunit beta-2 of Schizosaccharomyces pombe (strain 972 / ATCC 24843) (Fission yeast).